Reading from the N-terminus, the 182-residue chain is Alpha-S2-casein (182 aa).

Positions Met-1–Ala-15 are cleaved as a signal peptide. Phosphoserine occurs at positions 22, 23, and 24.

It belongs to the alpha-casein family. In terms of tissue distribution, mammary gland specific. Secreted in milk.

The protein resides in the secreted. Its function is as follows. Important role in the capacity of milk to transport calcium phosphate. This is Alpha-S2-casein (CSN1S2) from Oryctolagus cuniculus (Rabbit).